The chain runs to 1529 residues: DNA (cytosine-5)-methyltransferase 1B (1529 aa).

2 disordered regions span residues M1 to C56 and D674 to R706. Residues Q21–E35 show a composition bias toward basic and acidic residues. The span at D674–E694 shows a compositional bias: acidic residues. The span at S697–R706 shows a compositional bias: polar residues. 2 BAH domains span residues L741–P873 and I910–P1049. Positions L1093–K1527 constitute an SAM-dependent MTase C5-type domain. Residue C1198 is part of the active site.

Belongs to the class I-like SAM-binding methyltransferase superfamily. C5-methyltransferase family. As to expression, expressed in roots and inflorescences. Expressed in roots, panicles, anthers, pistils, endosperm and imbibed embryos. Expressed in tissues containing actively replicating and dividing cells, such as shoot and root meristems.

It localises to the nucleus. It carries out the reaction a 2'-deoxycytidine in DNA + S-adenosyl-L-methionine = a 5-methyl-2'-deoxycytidine in DNA + S-adenosyl-L-homocysteine + H(+). Major CG methylase that methylates chromatin CpG residues and maintains DNA methylation. Plays a major role in genomic imprinting, regulation of embryogenesis and seed viability. Maintains DNA methylation at the FIE1 gene locus in the embryo. In Oryza sativa subsp. japonica (Rice), this protein is DNA (cytosine-5)-methyltransferase 1B (MET1B).